We begin with the raw amino-acid sequence, 206 residues long: Large ribosomal subunit protein uL3 (206 aa).

The protein belongs to the universal ribosomal protein uL3 family. In terms of assembly, part of the 50S ribosomal subunit. Forms a cluster with proteins L14 and L19.

Its function is as follows. One of the primary rRNA binding proteins, it binds directly near the 3'-end of the 23S rRNA, where it nucleates assembly of the 50S subunit. The polypeptide is Large ribosomal subunit protein uL3 (Cytophaga hutchinsonii (strain ATCC 33406 / DSM 1761 / CIP 103989 / NBRC 15051 / NCIMB 9469 / D465)).